A 209-amino-acid chain; its full sequence is Imidazoleglycerol-phosphate dehydratase (209 aa).

This sequence belongs to the imidazoleglycerol-phosphate dehydratase family.

Its subcellular location is the cytoplasm. The enzyme catalyses D-erythro-1-(imidazol-4-yl)glycerol 3-phosphate = 3-(imidazol-4-yl)-2-oxopropyl phosphate + H2O. The protein operates within amino-acid biosynthesis; L-histidine biosynthesis; L-histidine from 5-phospho-alpha-D-ribose 1-diphosphate: step 6/9. The sequence is that of Imidazoleglycerol-phosphate dehydratase from Microcystis aeruginosa (strain NIES-843 / IAM M-2473).